The primary structure comprises 329 residues: ATPase ASNA1 homolog 1 (329 aa).

26 to 33 (KGGVGKTT) is an ATP binding site. Residue Asp55 is part of the active site. Positions 235 and 262 each coordinate ATP. Residues Cys271 and Cys274 each coordinate Zn(2+).

This sequence belongs to the arsA ATPase family. Homodimer.

The protein resides in the cytoplasm. The protein localises to the endoplasmic reticulum. Functionally, ATPase required for the post-translational delivery of tail-anchored (TA) proteins to the endoplasmic reticulum. Recognizes and selectively binds the transmembrane domain of TA proteins in the cytosol. This complex then targets to the endoplasmic reticulum by membrane-bound receptors, where the tail-anchored protein is released for insertion. This process is regulated by ATP binding and hydrolysis. ATP binding drives the homodimer towards the closed dimer state, facilitating recognition of newly synthesized TA membrane proteins. ATP hydrolysis is required for insertion. Subsequently, the homodimer reverts towards the open dimer state, lowering its affinity for the membrane-bound receptor, and returning it to the cytosol to initiate a new round of targeting. The protein is ATPase ASNA1 homolog 1 of Paramecium tetraurelia.